The chain runs to 154 residues: Myoglobin (154 aa).

A Globin domain is found at 2–148; that stretch reads GLSDGEWQLV…FRNDMAAKYK (147 aa). Ser4 carries the phosphoserine modification. His65 contacts nitrite. Position 65 (His65) interacts with O2. A Phosphothreonine modification is found at Thr68. His94 is a binding site for heme b.

The protein belongs to the globin family. As to quaternary structure, monomeric.

Its subcellular location is the cytoplasm. The protein resides in the sarcoplasm. The enzyme catalyses Fe(III)-heme b-[protein] + nitric oxide + H2O = Fe(II)-heme b-[protein] + nitrite + 2 H(+). The catalysed reaction is H2O2 + AH2 = A + 2 H2O. Monomeric heme protein which primary function is to store oxygen and facilitate its diffusion within muscle tissues. Reversibly binds oxygen through a pentacoordinated heme iron and enables its timely and efficient release as needed during periods of heightened demand. Depending on the oxidative conditions of tissues and cells, and in addition to its ability to bind oxygen, it also has a nitrite reductase activity whereby it regulates the production of bioactive nitric oxide. Under stress conditions, like hypoxia and anoxia, it also protects cells against reactive oxygen species thanks to its pseudoperoxidase activity. The protein is Myoglobin (MB) of Callithrix jacchus (White-tufted-ear marmoset).